The following is a 113-amino-acid chain: Integration host factor subunit alpha (113 aa).

Residues 88–113 (ALNGGVSDETEGADDDDDDEEGEGDE) form a disordered region. A compositionally biased stretch (acidic residues) spans 95 to 113 (DETEGADDDDDDEEGEGDE).

The protein belongs to the bacterial histone-like protein family. Heterodimer of an alpha and a beta chain.

Its function is as follows. This protein is one of the two subunits of integration host factor, a specific DNA-binding protein that functions in genetic recombination as well as in transcriptional and translational control. This is Integration host factor subunit alpha from Anaeromyxobacter dehalogenans (strain 2CP-C).